Reading from the N-terminus, the 315-residue chain is Ribosomal RNA small subunit methyltransferase H (315 aa).

The tract at residues 1–21 is disordered; that stretch reads MNVVNVVPMHLPPPPPRPRGE. S-adenosyl-L-methionine-binding positions include 51 to 53, Asp-69, Phe-96, Asp-117, and Gln-124; that span reads GGH. The disordered stretch occupies residues 281 to 315; that stretch reads KKPVTAGDDEVEGNPRARSAKLRAARRVGGAEALA.

This sequence belongs to the methyltransferase superfamily. RsmH family.

It localises to the cytoplasm. It catalyses the reaction cytidine(1402) in 16S rRNA + S-adenosyl-L-methionine = N(4)-methylcytidine(1402) in 16S rRNA + S-adenosyl-L-homocysteine + H(+). Functionally, specifically methylates the N4 position of cytidine in position 1402 (C1402) of 16S rRNA. This is Ribosomal RNA small subunit methyltransferase H from Sorangium cellulosum (strain So ce56) (Polyangium cellulosum (strain So ce56)).